Here is a 273-residue protein sequence, read N- to C-terminus: Gap junction beta-5 protein (273 aa).

At 1–20 (MNWSIFEGLLSGVNKYSTAF) the chain is on the cytoplasmic side. A helical membrane pass occupies residues 21–40 (GRIWLSLVFIFRVLVYLVTA). The Extracellular segment spans residues 41–75 (ERVWSDDHKDFDCNTRQPGCSNVCFDEFFPVSHVR). Residues 76-98 (LWALQLILVTCPSLLVVMHVAYR) form a helical membrane-spanning segment. Topologically, residues 99-126 (EVQEKRHREAHGENSGRLYLNPGKKRGG) are cytoplasmic. The helical transmembrane segment at 127–149 (LWWTYVCSLVFKASVDIAFLYVF) threads the bilayer. Topologically, residues 150 to 187 (HSFYPKYILPPVVKCHADPCPNIVDCFISKPSEKNIFT) are extracellular. Residues 188 to 210 (LFMVATAAICILLNLVELIYLVS) form a helical membrane-spanning segment. Over 211–273 (KRCHECLAAR…PRDHVKKTIL (63 aa)) the chain is Cytoplasmic.

It belongs to the connexin family. Beta-type (group I) subfamily. In terms of assembly, a connexon is composed of a hexamer of connexins.

The protein localises to the cell membrane. Its subcellular location is the cell junction. The protein resides in the gap junction. In terms of biological role, one gap junction consists of a cluster of closely packed pairs of transmembrane channels, the connexons, through which materials of low MW diffuse from one cell to a neighboring cell. In Homo sapiens (Human), this protein is Gap junction beta-5 protein (GJB5).